We begin with the raw amino-acid sequence, 493 residues long: Lysine--tRNA ligase (493 aa).

Mg(2+) is bound by residues Glu400 and Glu407.

Belongs to the class-II aminoacyl-tRNA synthetase family. In terms of assembly, homodimer. Mg(2+) is required as a cofactor.

Its subcellular location is the cytoplasm. It catalyses the reaction tRNA(Lys) + L-lysine + ATP = L-lysyl-tRNA(Lys) + AMP + diphosphate. In Syntrophomonas wolfei subsp. wolfei (strain DSM 2245B / Goettingen), this protein is Lysine--tRNA ligase.